The sequence spans 554 residues: Probable pectinesterase/pectinesterase inhibitor 6 (554 aa).

The first 32 residues, 1–32, serve as a signal peptide directing secretion; that stretch reads MDHKILLTPPKSLYTKCIITIIYVVSISHLNA. The tract at residues 29–183 is pectinesterase inhibitor 6; that stretch reads HLNAHFITSC…TKSISNSLAV (155 aa). N-linked (GlcNAc...) asparagine glycosylation is found at asparagine 119 and asparagine 172. The segment at 250–540 is pectinesterase 6; sequence DLVVAKDGSG…FTVENFLDGN (291 aa). Substrate-binding residues include threonine 327 and glutamine 357. Aspartate 380 (proton donor; for pectinesterase activity) is an active-site residue. Residues cysteine 394 and cysteine 414 are joined by a disulfide bond. The active-site Nucleophile; for pectinesterase activity is aspartate 401. Substrate-binding residues include arginine 460 and tryptophan 462.

It in the N-terminal section; belongs to the PMEI family. The protein in the C-terminal section; belongs to the pectinesterase family. Expressed in rosette leaves, flower and siliques.

The protein resides in the secreted. It localises to the cell wall. The catalysed reaction is [(1-&gt;4)-alpha-D-galacturonosyl methyl ester](n) + n H2O = [(1-&gt;4)-alpha-D-galacturonosyl](n) + n methanol + n H(+). It participates in glycan metabolism; pectin degradation; 2-dehydro-3-deoxy-D-gluconate from pectin: step 1/5. Functionally, acts in the modification of cell walls via demethylesterification of cell wall pectin. This is Probable pectinesterase/pectinesterase inhibitor 6 (PME6) from Arabidopsis thaliana (Mouse-ear cress).